We begin with the raw amino-acid sequence, 240 residues long: Adenylate dimethylallyltransferase (240 aa).

It belongs to the isopentenyl transferase family.

It catalyses the reaction dimethylallyl diphosphate + AMP = N(6)-(dimethylallyl)adenosine 5'-phosphate + diphosphate. Its function is as follows. Transfers dimethylallyl groups to AMP as part of the biosynthesis of cytokinin phytohormones. This is Adenylate dimethylallyltransferase (izt) from Agrobacterium tumefaciens (strain Ach5).